The following is a 185-amino-acid chain: Bcl-2-modifying factor (185 aa).

The disordered stretch occupies residues 1–28; that stretch reads MEPPQCVEELEDDVFQPEDGEPGTQPGS. A compositionally biased stretch (acidic residues) spans 8–21; sequence EELEDDVFQPEDGE. The interaction with DLC2 stretch occupies residues 67–75; sequence DKATQTLSP. A BH3 motif is present at residues 134–148; it reads IARKLQCIADQFHRL.

This sequence belongs to the Bcl-2 family. As to quaternary structure, interacts with MCL1, BCL2, BCL2L1/BCL-Xl, BCL2A1 and BCL2L2/BCL-w. Interacts with the myosin V actin motor complex through its binding to DLC2.

May play a role in apoptosis. The sequence is that of Bcl-2-modifying factor (Bmf) from Rattus norvegicus (Rat).